The following is a 498-amino-acid chain: L-xylulose/3-keto-L-gulonate kinase (498 aa).

It belongs to the FGGY kinase family. In terms of assembly, homodimer.

The enzyme catalyses L-xylulose + ATP = L-xylulose 5-phosphate + ADP + H(+). It carries out the reaction 3-dehydro-L-gulonate + ATP = 3-dehydro-L-gulonate 6-phosphate + ADP + H(+). Functionally, catalyzes the phosphorylation of L-xylulose and 3-keto-L-gulonate. Is involved in L-lyxose utilization via xylulose, and may also be involved in the utilization of 2,3-diketo-L-gulonate. The polypeptide is L-xylulose/3-keto-L-gulonate kinase (lyx) (Escherichia coli (strain K12)).